The sequence spans 205 residues: Transmembrane emp24 domain-containing protein A (205 aa).

The signal sequence occupies residues 1–24 (MMNNKLLLLVIALLCIASNSIVES). Topologically, residues 25–172 (FSFKVSAKVE…RNTAESTNSR (148 aa)) are lumenal. Residues 34–116 (EECIYEEIGV…DKTVSFILSV (83 aa)) enclose the GOLD domain. The chain crosses the membrane as a helical span at residues 173 to 193 (VLWWSVFEAFVLIALSIWQIY). The Cytoplasmic segment spans residues 194 to 205 (YLRRFFEVKRAV).

Belongs to the EMP24/GP25L family.

Its subcellular location is the cytoplasmic vesicle membrane. Functionally, could have a role in the budding of coatomer-coated and other species of coated vesicles. This Dictyostelium discoideum (Social amoeba) protein is Transmembrane emp24 domain-containing protein A (empA).